Here is a 105-residue protein sequence, read N- to C-terminus: MAAKIRRNDEVIVLVGKDKGKKGKVTKVLETGKVIVEGINLVKKHQKPVPALGQQGGIVEKEAAIDASNIAIFNDATGKADRIGFRFEEGKKVRFFKSNGETISN.

It belongs to the universal ribosomal protein uL24 family. In terms of assembly, part of the 50S ribosomal subunit.

Its function is as follows. One of two assembly initiator proteins, it binds directly to the 5'-end of the 23S rRNA, where it nucleates assembly of the 50S subunit. In terms of biological role, one of the proteins that surrounds the polypeptide exit tunnel on the outside of the subunit. This Aliivibrio salmonicida (strain LFI1238) (Vibrio salmonicida (strain LFI1238)) protein is Large ribosomal subunit protein uL24.